The primary structure comprises 534 residues: Endoglucanase 5 (534 aa).

A signal peptide spans 1-27; that stretch reads MSDVSGRFVVAAAVVAVSLAMAAAAAA. Asp-82 acts as the Nucleophile in catalysis. Active-site residues include His-432, Asp-484, and Glu-493. Positions 515–534 are disordered; the sequence is RRRGEDAPPSSTSPVAEDDL.

Belongs to the glycosyl hydrolase 9 (cellulase E) family.

It localises to the secreted. The enzyme catalyses Endohydrolysis of (1-&gt;4)-beta-D-glucosidic linkages in cellulose, lichenin and cereal beta-D-glucans.. This Oryza sativa subsp. japonica (Rice) protein is Endoglucanase 5.